We begin with the raw amino-acid sequence, 228 residues long: UPF0758 protein CTC_02075 (228 aa).

In terms of domain architecture, MPN spans 106-228 (NITNPKDAAY…YISLKEKDIL (123 aa)). Zn(2+)-binding residues include H177, H179, and D190. A JAMM motif motif is present at residues 177 to 190 (HNHPSGDTTPSKED).

This sequence belongs to the UPF0758 family.

The chain is UPF0758 protein CTC_02075 from Clostridium tetani (strain Massachusetts / E88).